We begin with the raw amino-acid sequence, 1427 residues long: DNA-directed RNA polymerase subunit beta' (1427 aa).

Residues Cys-70, Cys-72, Cys-85, and Cys-88 each coordinate Zn(2+). The Mg(2+) site is built by Asp-461, Asp-463, and Asp-465. Zn(2+)-binding residues include Cys-810, Cys-884, Cys-891, and Cys-894. Disordered regions lie at residues 1044-1065 and 1394-1427; these read QTDEATGMSSRVVTENRAAGRG and PEAAIGDDPLATVEGETHGTDADAGDYLIEGDEA.

The protein belongs to the RNA polymerase beta' chain family. In terms of assembly, the RNAP catalytic core consists of 2 alpha, 1 beta, 1 beta' and 1 omega subunit. When a sigma factor is associated with the core the holoenzyme is formed, which can initiate transcription. Mg(2+) is required as a cofactor. The cofactor is Zn(2+).

It carries out the reaction RNA(n) + a ribonucleoside 5'-triphosphate = RNA(n+1) + diphosphate. In terms of biological role, DNA-dependent RNA polymerase catalyzes the transcription of DNA into RNA using the four ribonucleoside triphosphates as substrates. This Novosphingobium aromaticivorans (strain ATCC 700278 / DSM 12444 / CCUG 56034 / CIP 105152 / NBRC 16084 / F199) protein is DNA-directed RNA polymerase subunit beta'.